A 145-amino-acid chain; its full sequence is MWSYEGKCGFLLLSVYKEQVLDSYSPLTKENGISSNPRYIKRKFPFDSGFPFTRKLPAKVESFLCLPLFLSFLVANLILWLSFHSARVGHQKLSYHLLEWKAFPSSFRNKESKATCDLSSWSNPYFKRKAQIPFSFSRYLLKYLF.

The helical transmembrane segment at 63–83 (FLCLPLFLSFLVANLILWLSF) threads the bilayer.

The protein resides in the mitochondrion membrane. This is an uncharacterized protein from Arabidopsis thaliana (Mouse-ear cress).